We begin with the raw amino-acid sequence, 499 residues long: Leukocyte immunoglobulin-like receptor subfamily A member 4 (499 aa).

The first 23 residues, 1 to 23 (MTLILTSLLFFGLSLGPRTRVQA), serve as a signal peptide directing secretion. 4 Ig-like C2-type domains span residues 24 to 118 (ENLL…LVVT), 123 to 213 (PTLS…SDPL), 224 to 313 (PSLL…DPLD), and 324 to 413 (PSLS…SEPL). At 24–446 (ENLLKPILWA…PHLQDYTVEN (423 aa)) the chain is on the extracellular side. Cysteine 49 and cysteine 98 are oxidised to a cystine. An N-linked (GlcNAc...) asparagine glycan is attached at asparagine 138. The cysteines at positions 143 and 195 are disulfide-linked. 3 N-linked (GlcNAc...) asparagine glycosylation sites follow: asparagine 239, asparagine 279, and asparagine 300. Cysteine 244 and cysteine 295 are disulfide-bonded. Cysteine 344 and cysteine 395 are disulfide-bonded. The residue at position 404 (tyrosine 404) is a 3'-nitrotyrosine. The chain crosses the membrane as a helical span at residues 447–467 (LIRMGVAGLVLLFLGILLFEA). Topologically, residues 468–499 (QHSQRSPPRCSQEANSRKDNAPFRVVEPWEQI) are cytoplasmic.

In terms of assembly, interacts with FCER1G; this stabilizes the expression of both proteins at the cell membrane. Interacts with BST2; leads to activation of LILRA4-mediated signaling and down-regulation of the innate immune response to viral pathogens. As to expression, detected on plasmacytoid dendritic cells (at protein level). Detected on plasmacytoid dendritic cells, but not on monocytes or B cells.

It is found in the cell membrane. Functions coreceptor to limit the innate immune responses to viral infections; signaling occurs via FCER1G. Down-regulates the production of IFNA1, IFNA2, IFNA4, IFNB1 and TNF by plasmacytoid dendritic cells that have been exposed to influenza virus or cytidine-phosphate-guanosine (CpG) dinucleotides, indicating it functions as a negative regulator of TLR7 and TLR9 signaling cascades. Down-regulates interferon production in response to interaction with BST2 on HIV-1 infected cells. Activates a signaling cascade in complex with FCER1G that results in phosphorylation of Src family and Syk kinases and thereby triggers mobilization of intracellular Ca(2+). Does not interfere with the differentiation of plasmacytoid dendritic cells into antigen-presenting cells. The polypeptide is Leukocyte immunoglobulin-like receptor subfamily A member 4 (Homo sapiens (Human)).